The following is a 359-amino-acid chain: Heme A synthase (359 aa).

6 helical membrane-spanning segments follow: residues 23 to 43 (AVAF…VLGG), 85 to 105 (YAAL…FFEW), 109 to 129 (LLGR…WLRG), 137 to 157 (LKLL…WWMV), 172 to 192 (LAIH…LAAS), and 212 to 232 (AGLI…VAGL). His-276 is a heme binding site. The next 3 membrane-spanning stretches (helical) occupy residues 278–298 (MVAY…SGTL), 308–328 (IALL…LVLV), and 329–349 (VPLW…GMAV). A heme-binding site is contributed by His-337.

The protein belongs to the COX15/CtaA family. Type 2 subfamily. As to quaternary structure, interacts with CtaB. The cofactor is heme b.

It is found in the cell membrane. The catalysed reaction is Fe(II)-heme o + 2 A + H2O = Fe(II)-heme a + 2 AH2. Its pathway is porphyrin-containing compound metabolism; heme A biosynthesis; heme A from heme O: step 1/1. Catalyzes the conversion of heme O to heme A by two successive hydroxylations of the methyl group at C8. The first hydroxylation forms heme I, the second hydroxylation results in an unstable dihydroxymethyl group, which spontaneously dehydrates, resulting in the formyl group of heme A. The sequence is that of Heme A synthase from Beijerinckia indica subsp. indica (strain ATCC 9039 / DSM 1715 / NCIMB 8712).